The following is a 306-amino-acid chain: Elongation factor Ts (306 aa).

The interval 79 to 82 (TDFV) is involved in Mg(2+) ion dislocation from EF-Tu.

Belongs to the EF-Ts family.

Its subcellular location is the cytoplasm. In terms of biological role, associates with the EF-Tu.GDP complex and induces the exchange of GDP to GTP. It remains bound to the aminoacyl-tRNA.EF-Tu.GTP complex up to the GTP hydrolysis stage on the ribosome. The chain is Elongation factor Ts from Mesorhizobium japonicum (strain LMG 29417 / CECT 9101 / MAFF 303099) (Mesorhizobium loti (strain MAFF 303099)).